Reading from the N-terminus, the 594-residue chain is Type IV inositol polyphosphate 5-phosphatase 7 (594 aa).

A disordered region spans residues 246-300 (FRCGHRPSDYSRRPSDYSRPSDYYSRPSNYSRPSDVSRWGSSDDDNGPGDSPSTF). Basic and acidic residues predominate over residues 251–261 (RPSDYSRRPSD). Over residues 262–279 (YSRPSDYYSRPSNYSRPS) the composition is skewed to low complexity. Catalytic regions lie at residues 435–450 (DRVI…IALS) and 515–530 (KRRT…WHGE).

The protein belongs to the inositol polyphosphate 5-phosphatase family. In terms of tissue distribution, broadly expressed in emerging organs. Mostly localized in procambium of growing organs. Restricted to vascular differentiating cells of young organs.

The protein localises to the nucleus. Its subcellular location is the cell membrane. The catalysed reaction is a 1,2-diacyl-sn-glycero-3-phospho-(1D-myo-inositol-4,5-bisphosphate) + H2O = a 1,2-diacyl-sn-glycero-3-phospho-(1D-myo-inositol 4-phosphate) + phosphate. It carries out the reaction a 1,2-diacyl-sn-glycero-3-phospho-(1D-myo-inositol-3,4,5-trisphosphate) + H2O = a 1,2-diacyl-sn-glycero-3-phospho-(1D-myo-inositol-3,4-bisphosphate) + phosphate. Has phosphatase activity toward PtdIns(4,5)P2 and at a lower extent toward PtdIns(3,4,5)P3 but not toward Ins(1,4,5)P3. Acts redundantly with CVP2 for maintaining vascular continuity. Regulates phosphoinositide-dependent VAN3 localization. Functions in salt stress response by regulating reactive oxygen species (ROS) production and stress-responsive genes expression. The chain is Type IV inositol polyphosphate 5-phosphatase 7 from Arabidopsis thaliana (Mouse-ear cress).